Consider the following 271-residue polypeptide: MSVVGKRVVDELCRVVSSYLGQSGQSLDLERCIDGAPVYAKGGATAICTVRMQHGCVYHLEFVYKFWAHLLEEMHYPFSPCFVISNNGLSTTLKCFLCRPSDAVSQFGHVLPVESDVYLAKNTSVVLGQDDFTKFKASLVFSKNLGVYNSMVICRTYFTDYRQVLQFLVVTPKSHKRLKSLLETVYCLAAPVADSAAQGGAGFPTNGRDARACTSDVTAVYWAGQGGRTVRILGAFQWSLGRAVALVRRSWPWISAGIAFLCLGLVWMRPS.

The Perinuclear space portion of the chain corresponds to 1–249; that stretch reads MSVVGKRVVD…LGRAVALVRR (249 aa). A helical membrane pass occupies residues 250-267; it reads SWPWISAGIAFLCLGLVW. The Nuclear segment spans residues 268–271; that stretch reads MRPS.

This sequence belongs to the herpesviridae NEC2 protein family. As to quaternary structure, forms a heterohexameric complex with NEC1. Post-translationally, phosphorylated.

Its subcellular location is the host nucleus inner membrane. Functionally, plays an essential role in virion nuclear egress, the first step of virion release from infected cell. Within the host nucleus, NEC1 interacts with the newly formed capsid through the vertexes and directs it to the inner nuclear membrane by associating with NEC2. Induces the budding of the capsid at the inner nuclear membrane as well as its envelopment into the perinuclear space. There, the NEC1/NEC2 complex promotes the fusion of the enveloped capsid with the outer nuclear membrane and the subsequent release of the viral capsid into the cytoplasm where it will reach the secondary budding sites in the host Golgi or trans-Golgi network. The sequence is that of Nuclear egress protein 2 from Homo sapiens (Human).